The primary structure comprises 179 residues: Cytochrome b6-f complex iron-sulfur subunit (179 aa).

Residues 21–43 (LLTFGTVTGVALGALYPVVKYFI) traverse the membrane as a helical segment. Residues 61–162 (GNDVSLSKFL…ANTVDDKIIL (102 aa)) enclose the Rieske domain. Residues Cys108, His110, Cys126, and His129 each coordinate [2Fe-2S] cluster. Cysteines 113 and 128 form a disulfide.

Belongs to the Rieske iron-sulfur protein family. In terms of assembly, the 4 large subunits of the cytochrome b6-f complex are cytochrome b6, subunit IV (17 kDa polypeptide, PetD), cytochrome f and the Rieske protein, while the 4 small subunits are PetG, PetL, PetM and PetN. The complex functions as a dimer. [2Fe-2S] cluster is required as a cofactor.

The protein resides in the cellular thylakoid membrane. It catalyses the reaction 2 oxidized [plastocyanin] + a plastoquinol + 2 H(+)(in) = 2 reduced [plastocyanin] + a plastoquinone + 4 H(+)(out). Functionally, component of the cytochrome b6-f complex, which mediates electron transfer between photosystem II (PSII) and photosystem I (PSI), cyclic electron flow around PSI, and state transitions. This chain is Cytochrome b6-f complex iron-sulfur subunit, found in Desmonostoc sp. (strain PCC 7906) (Nostoc sp. (strain PCC 7906)).